We begin with the raw amino-acid sequence, 963 residues long: Importin-13 (963 aa).

20 HEAT repeats span residues 24 to 54 (ENVEKALHQLYYDPNIENKNLAQKWLMQAQV), 56 to 88 (PQAWHFSWQLLQPDKVPEIQYFGASALHIKISR), 95 to 135 (TDQY…LSMM), 142 to 179 (AVADMVRLFQAEDSPVDSQGRCLALLELLTVLPEEFQT), 194 to 231 (LAVECGAVFPLLEQLLQQPSSPSCVRQKVLKCFSSWVQ), 236 to 268 (LQDCEALIQAAFAALQDSELFDSSVEAIVNAIS), 276 to 325 (VNTL…ALLD), 330 to 372 (WQSF…DDIL), 375 to 438 (EAEK…YEML), 440 to 476 (AELLSNLYDKLGRLLTSSEEPYSWQHTEALLYGFQSI), 487 to 522 (VVPGLIGLIPRISISNVQLADTVMFTIGALSEWLAD), 524 to 558 (PVMINSVLPLVLHALGNPELSVSSVSTLKKICREC), 562 to 600 (LPPYAANIVAVSQDVLMKQIHKTSQCMWLMQALGFLLSA), 603 to 648 (VEEN…SNLF), 676 to 716 (PVVV…VKTL), 720 to 754 (FAPMVPQLCEMLGRMYSTVPQASALDLTRQLVHIF), 761 to 803 (FPPI…ALKR), 815 to 845 (VKAVFQCAVLALKFPEAPTVKASCGFFTELL), 860 to 893 (EDGRMLLIAVLEAIGGQASRSLMDCFADILFALN), and 897 to 931 (FSLLSMWIKEALQPPGFPSARLSPEQKDTFSQQIL). An Importin N-terminal domain is found at 45-111 (AQKWLMQAQV…KAHSFTQITR (67 aa)).

Belongs to the importin beta family. In terms of assembly, interacts with UBC9, RAN, RBM8A, eIF-1A and PAX6. In terms of tissue distribution, expressed in fetal brain, heart, intestine and kidney.

It is found in the cytoplasm. The protein localises to the nucleus. Functionally, functions in nuclear protein import as nuclear transport receptor. Serves as receptor for nuclear localization signals (NLS) in cargo substrates. Is thought to mediate docking of the importin/substrate complex to the nuclear pore complex (NPC) through binding to nucleoporin and the complex is subsequently translocated through the pore by an energy requiring, Ran-dependent mechanism. At the nucleoplasmic side of the NPC, Ran binds to the importin, the importin/substrate complex dissociates and importin is re-exported from the nucleus to the cytoplasm where GTP hydrolysis releases Ran. The directionality of nuclear import is thought to be conferred by an asymmetric distribution of the GTP- and GDP-bound forms of Ran between the cytoplasm and nucleus. Mediates the nuclear import of UBC9, the RBM8A/MAGOH complex, PAX6 and probably other members of the paired homeobox family. Also mediates nuclear export of eIF-1A, and the cytoplasmic release of eIF-1A is triggered by the loading of import substrates onto IPO13. In Rattus norvegicus (Rat), this protein is Importin-13 (Ipo13).